The following is a 77-amino-acid chain: MARVCDVTGKKPMVGNNVSHANNKTKRRFLPNLQYRRFWVESENRWVRLRVSSAALRLIDKNGIDSVLADLRARGQA.

The protein belongs to the bacterial ribosomal protein bL28 family.

The chain is Large ribosomal subunit protein bL28 from Paracidovorax citrulli (strain AAC00-1) (Acidovorax citrulli).